The following is a 486-amino-acid chain: Aspartyl/glutamyl-tRNA(Asn/Gln) amidotransferase subunit B (486 aa).

It belongs to the GatB/GatE family. GatB subfamily. As to quaternary structure, heterotrimer of A, B and C subunits.

It carries out the reaction L-glutamyl-tRNA(Gln) + L-glutamine + ATP + H2O = L-glutaminyl-tRNA(Gln) + L-glutamate + ADP + phosphate + H(+). The catalysed reaction is L-aspartyl-tRNA(Asn) + L-glutamine + ATP + H2O = L-asparaginyl-tRNA(Asn) + L-glutamate + ADP + phosphate + 2 H(+). Allows the formation of correctly charged Asn-tRNA(Asn) or Gln-tRNA(Gln) through the transamidation of misacylated Asp-tRNA(Asn) or Glu-tRNA(Gln) in organisms which lack either or both of asparaginyl-tRNA or glutaminyl-tRNA synthetases. The reaction takes place in the presence of glutamine and ATP through an activated phospho-Asp-tRNA(Asn) or phospho-Glu-tRNA(Gln). This chain is Aspartyl/glutamyl-tRNA(Asn/Gln) amidotransferase subunit B, found in Herminiimonas arsenicoxydans.